The chain runs to 211 residues: Large ribosomal subunit protein uL3 (211 aa).

This sequence belongs to the universal ribosomal protein uL3 family. Part of the 50S ribosomal subunit. Forms a cluster with proteins L14 and L19.

In terms of biological role, one of the primary rRNA binding proteins, it binds directly near the 3'-end of the 23S rRNA, where it nucleates assembly of the 50S subunit. In Geobacter sp. (strain M21), this protein is Large ribosomal subunit protein uL3.